The following is a 346-amino-acid chain: Biotin synthase (346 aa).

The Radical SAM core domain maps to 38 to 256; that stretch reads QQVQVSTLLS…IAVARIMMPT (219 aa). [4Fe-4S] cluster contacts are provided by Cys-53, Cys-57, and Cys-60. Cys-97, Cys-128, Cys-188, and Arg-260 together coordinate [2Fe-2S] cluster.

Belongs to the radical SAM superfamily. Biotin synthase family. Homodimer. [4Fe-4S] cluster serves as cofactor. The cofactor is [2Fe-2S] cluster.

The catalysed reaction is (4R,5S)-dethiobiotin + (sulfur carrier)-SH + 2 reduced [2Fe-2S]-[ferredoxin] + 2 S-adenosyl-L-methionine = (sulfur carrier)-H + biotin + 2 5'-deoxyadenosine + 2 L-methionine + 2 oxidized [2Fe-2S]-[ferredoxin]. It functions in the pathway cofactor biosynthesis; biotin biosynthesis; biotin from 7,8-diaminononanoate: step 2/2. Catalyzes the conversion of dethiobiotin (DTB) to biotin by the insertion of a sulfur atom into dethiobiotin via a radical-based mechanism. The protein is Biotin synthase of Salmonella agona (strain SL483).